Reading from the N-terminus, the 263-residue chain is UPF0758 protein NGR_c13970 (263 aa).

The region spanning 141–263 (VLSSWSAVID…HVSMKGLRLF (123 aa)) is the MPN domain. Zn(2+)-binding residues include H212, H214, and D225. The JAMM motif signature appears at 212-225 (HNHPSGDPTPSRAD).

This sequence belongs to the UPF0758 family.

The protein is UPF0758 protein NGR_c13970 of Sinorhizobium fredii (strain NBRC 101917 / NGR234).